The sequence spans 777 residues: MRSFRSSILLVLLSLITVLNATRARSETESKVHIVYLGEKKHHDPEFVTESHHQMLASLLGSKKDADDSMVYSYRHGFSGFAAKLTKSQAKKIADLPEVVHVIPDGFHELATTRTWEYLGLSSANPKNLLNDTNMGDQVIIGVIDTGVWPESESFNDNGVGPIPRKWKGGCESGENFRSTDCNRKLIGAKYFINGFLAENKGFNTTESRDYISARDFDGHGTHVASIAGGSFVPNVSYKGLAGGTLRGGAPRARIAMYKACWFHEELKGVTCSDSDIMKAIDEAIHDGVDVLSISLVGQIPLNSETDIRDEFATGLFHAVAKGIVVVCAGGNDGPAAQTVVNIAPWILTVAATTLDRSFPTPITLGNNKVILGQATYTGPELGLTSLVYPENARNNNETFSGVCESLNLNPNYTMAMKVVLCFTASRTNAAISRAASFVKAAGGLGLIISRNPVYTLSPCNDDFPCVAVDYELGTDILSYIRSTRSPVVKIQRSRTLSGQPVGTKVVNFSSRGPNSMSPAILKPDIAAPGVRILAATSPNDTLNVGGFAMLSGTSMATPVISGVIALLKALHPEWSPAAFRSAIVTTAWRTDPFGEQIFAEGSSRKVSDPFDYGGGIVNPEKAAEPGLIYDMGPQDYILYLCSAGYNDSSISQLVGQITVCSNPKPSVLDVNLPSITIPNLKDEVTLTRTVTNVGLVDSVYKVSVEPPLGVRVVVTPETLVFNSKTISVSFTVRVSTTHKINTGYYFGSLTWTDSVHNVVIPLSVRTQILQNYYDEN.

A signal peptide spans 1–24 (MRSFRSSILLVLLSLITVLNATRA). Residues 25 to 111 (RSETESKVHI…VIPDGFHELA (87 aa)) constitute a propeptide, removed in mature form. Positions 32–109 (VHIVYLGEKK…VHVIPDGFHE (78 aa)) constitute an Inhibitor I9 domain. One can recognise a Peptidase S8 domain in the interval 115 to 624 (TWEYLGLSSA…GGIVNPEKAA (510 aa)). N131 carries an N-linked (GlcNAc...) asparagine glycan. D145 (charge relay system) is an active-site residue. N204 is a glycosylation site (N-linked (GlcNAc...) asparagine). The Charge relay system role is filled by H220. Residues N235, N397, N412, N508, and N540 are each glycosylated (N-linked (GlcNAc...) asparagine). Residues 403–481 (VCESLNLNPN…ELGTDILSYI (79 aa)) form the PA domain. Residue S555 is the Charge relay system of the active site. N647 carries N-linked (GlcNAc...) asparagine glycosylation.

This sequence belongs to the peptidase S8 family.

The protein localises to the secreted. It localises to the extracellular space. Its subcellular location is the extracellular matrix. Its function is as follows. Serine protease that plays a role in the control of the establishment of immune priming and systemic induced resistance. The protein is Subtilisin-like protease SBT3.3 of Arabidopsis thaliana (Mouse-ear cress).